The primary structure comprises 145 residues: Holo-[acyl-carrier-protein] synthase (145 aa).

Positions 9 and 59 each coordinate Mg(2+).

The protein belongs to the P-Pant transferase superfamily. AcpS family. The cofactor is Mg(2+).

It is found in the cytoplasm. It catalyses the reaction apo-[ACP] + CoA = holo-[ACP] + adenosine 3',5'-bisphosphate + H(+). In terms of biological role, transfers the 4'-phosphopantetheine moiety from coenzyme A to a Ser of acyl-carrier-protein. This chain is Holo-[acyl-carrier-protein] synthase, found in Nocardia farcinica (strain IFM 10152).